A 248-amino-acid polypeptide reads, in one-letter code: Carbohydrate deacetylase (248 aa).

2 residues coordinate Mg(2+): His-59 and His-121.

The protein belongs to the YdjC deacetylase family. Mg(2+) serves as cofactor.

Its function is as follows. Probably catalyzes the deacetylation of acetylated carbohydrates an important step in the degradation of oligosaccharides. In Brevibacillus brevis (strain 47 / JCM 6285 / NBRC 100599), this protein is Carbohydrate deacetylase.